We begin with the raw amino-acid sequence, 227 residues long: 7-cyano-7-deazaguanine synthase (227 aa).

8–18 provides a ligand contact to ATP; it reads VSGGADSATVL. Cysteine 192, cysteine 202, cysteine 205, and cysteine 208 together coordinate Zn(2+).

This sequence belongs to the QueC family. Requires Zn(2+) as cofactor.

The catalysed reaction is 7-carboxy-7-deazaguanine + NH4(+) + ATP = 7-cyano-7-deazaguanine + ADP + phosphate + H2O + H(+). The protein operates within purine metabolism; 7-cyano-7-deazaguanine biosynthesis. Catalyzes the ATP-dependent conversion of 7-carboxy-7-deazaguanine (CDG) to 7-cyano-7-deazaguanine (preQ(0)). This Rickettsia akari (strain Hartford) protein is 7-cyano-7-deazaguanine synthase.